The chain runs to 1461 residues: Potassium channel K2 (1461 aa).

The next 6 helical transmembrane spans lie at 44 to 64, 142 to 162, 183 to 203, 218 to 238, 242 to 262, and 281 to 301; these read IIEG…LIYI, FNYY…YISL, IYNM…MVII, LIDI…IFVF, IDIY…NVSY, and IVLG…TIQA. An intramembrane region (pore-forming) is located at residues 322–340; the sequence is YFYFSIISISTVGYGDIFP. The helical transmembrane segment at 349-369 threads the bilayer; sequence CIIFIFWTFIWVPIQFNDLII. The interval 771–794 is disordered; it reads KRDDFDNNNNNNNNNIVKSRKKGR.

As to quaternary structure, may form oligomers or interact with other proteins.

Its subcellular location is the membrane. In terms of biological role, contributes to transmembrane potassium transport. The polypeptide is Potassium channel K2 (Plasmodium falciparum (isolate 3D7)).